The following is a 296-amino-acid chain: MKDKLVKAIAKDGQVRIIGAITTELVNEGVRLHNCAPTAAAALGRMLTAGALMGTTLKSEKDTLTLQIHGGGIAKGVVITSYADGHVKGYIGNPTADIEPNSKGKLDVSGIIGKNGNLLVIRDMGLKEPYIGQVPIYTGEIGEDLAYYYTVSEQTPSAVGLGVLVDKDLSIKSAGGFIIQMMPGADEMLADLISYRLEEIPSITEMISKGMTIEEILEYIFEDMDLKILESIVPEYRCDCSREKVERALASIGQKDLKEIYDEGKEEELKCHFCNKAYVFSHDEVGDILENYYSEK.

Cystine bridges form between cysteine 238–cysteine 240 and cysteine 271–cysteine 274.

It belongs to the HSP33 family. Post-translationally, under oxidizing conditions two disulfide bonds are formed involving the reactive cysteines. Under reducing conditions zinc is bound to the reactive cysteines and the protein is inactive.

It localises to the cytoplasm. Functionally, redox regulated molecular chaperone. Protects both thermally unfolding and oxidatively damaged proteins from irreversible aggregation. Plays an important role in the bacterial defense system toward oxidative stress. The chain is 33 kDa chaperonin from Clostridium botulinum (strain ATCC 19397 / Type A).